The chain runs to 360 residues: Threonine synthase (360 aa).

K69 carries the post-translational modification N6-(pyridoxal phosphate)lysine. Pyridoxal 5'-phosphate contacts are provided by residues N95, 196–200 (GNAGN), and T326.

The protein belongs to the threonine synthase family. Homodimer. Requires pyridoxal 5'-phosphate as cofactor.

It carries out the reaction O-phospho-L-homoserine + H2O = L-threonine + phosphate. Its pathway is amino-acid biosynthesis; L-threonine biosynthesis; L-threonine from L-aspartate: step 5/5. Functionally, catalyzes the gamma-elimination of phosphate from L-phosphohomoserine and the beta-addition of water to produce L-threonine. The protein is Threonine synthase (thrC) of Mycobacterium bovis (strain ATCC BAA-935 / AF2122/97).